Consider the following 421-residue polypeptide: Gamma-glutamyl phosphate reductase (421 aa).

The protein belongs to the gamma-glutamyl phosphate reductase family.

It is found in the cytoplasm. It carries out the reaction L-glutamate 5-semialdehyde + phosphate + NADP(+) = L-glutamyl 5-phosphate + NADPH + H(+). The protein operates within amino-acid biosynthesis; L-proline biosynthesis; L-glutamate 5-semialdehyde from L-glutamate: step 2/2. Functionally, catalyzes the NADPH-dependent reduction of L-glutamate 5-phosphate into L-glutamate 5-semialdehyde and phosphate. The product spontaneously undergoes cyclization to form 1-pyrroline-5-carboxylate. This is Gamma-glutamyl phosphate reductase from Brucella melitensis biotype 1 (strain ATCC 23456 / CCUG 17765 / NCTC 10094 / 16M).